The chain runs to 144 residues: Peptide methionine sulfoxide reductase MsrB (144 aa).

A MsrB domain is found at 6-128; the sequence is KDELKKKLTP…NSAALRFIPK (123 aa). Cys-117 acts as the Nucleophile in catalysis.

The protein belongs to the MsrB Met sulfoxide reductase family.

It carries out the reaction L-methionyl-[protein] + [thioredoxin]-disulfide + H2O = L-methionyl-(R)-S-oxide-[protein] + [thioredoxin]-dithiol. The protein is Peptide methionine sulfoxide reductase MsrB of Shouchella clausii (strain KSM-K16) (Alkalihalobacillus clausii).